A 576-amino-acid chain; its full sequence is Glutamine--tRNA ligase (576 aa).

Positions 47–57 match the 'HIGH' region motif; that stretch reads PEPNGYLHIGH. Residues 48 to 50 and 54 to 60 each bind ATP; these read EPN and HIGHAKS. The L-glutamine site is built by aspartate 80 and tyrosine 229. Residues threonine 248 and 283–284 contribute to the ATP site; that span reads RL. The 'KMSKS' region motif lies at 290–294; that stretch reads ITSKR.

This sequence belongs to the class-I aminoacyl-tRNA synthetase family. In terms of assembly, monomer.

Its subcellular location is the cytoplasm. The enzyme catalyses tRNA(Gln) + L-glutamine + ATP = L-glutaminyl-tRNA(Gln) + AMP + diphosphate. This Ralstonia pickettii (strain 12J) protein is Glutamine--tRNA ligase.